Reading from the N-terminus, the 347-residue chain is Heat-inducible transcription repressor HrcA (347 aa).

The protein belongs to the HrcA family.

In terms of biological role, negative regulator of class I heat shock genes (grpE-dnaK-dnaJ and groELS operons). Prevents heat-shock induction of these operons. The protein is Heat-inducible transcription repressor HrcA of Lactobacillus delbrueckii subsp. bulgaricus (strain ATCC BAA-365 / Lb-18).